The sequence spans 360 residues: Peptide chain release factor 1 (360 aa).

The residue at position 235 (Q235) is an N5-methylglutamine. The disordered stretch occupies residues 285-311 (KRQQAQASERRNLLGSGDRSDRHRTYN). The span at 292 to 308 (SERRNLLGSGDRSDRHR) shows a compositional bias: basic and acidic residues.

This sequence belongs to the prokaryotic/mitochondrial release factor family. In terms of processing, methylated by PrmC. Methylation increases the termination efficiency of RF1.

It localises to the cytoplasm. Its function is as follows. Peptide chain release factor 1 directs the termination of translation in response to the peptide chain termination codons UAG and UAA. The chain is Peptide chain release factor 1 from Hamiltonella defensa subsp. Acyrthosiphon pisum (strain 5AT).